The sequence spans 282 residues: Aquaporin PIP2-7 (282 aa).

The segment at 1–21 (MSKEVSVEGEQPPVKDYTDPP) is disordered. The Cytoplasmic segment spans residues 1–38 (MSKEVSVEGEQPPVKDYTDPPPEPLLNFGELRLWSFYR). The helical transmembrane segment at 39–59 (ALIAEFVATLLFLYVTIATVI) threads the bilayer. Residues 60 to 71 (GHKEQNAADQCS) are Extracellular-facing. Residues 72-92 (GVGLLGIAWAFGGMIFILVYC) traverse the membrane as a helical segment. The Cytoplasmic segment spans residues 93 to 120 (TAGISGGHINPAVTLGLFLARKVSLIRA). An NPA 1 motif is present at residues 102-104 (NPA). A helical transmembrane segment spans residues 121 to 141 (LLYMVAQCLGAIVGVGIVKGI). Topologically, residues 142-162 (MKHQYNSLGGGANVVAAGYSK) are extracellular. The chain crosses the membrane as a helical span at residues 163–183 (GTALGAEIIGTFVLVYTVFSA). At 184–196 (TDPKRSARDSHVP) the chain is on the cytoplasmic side. A helical membrane pass occupies residues 197–217 (VLAPLPIGFAVFMVHLATIPI). The Extracellular segment spans residues 218 to 244 (TGTGINPARSLGAAVIYNQDKPWDDHW). An NPA 2 motif is present at residues 223-225 (NPA). A helical membrane pass occupies residues 245–265 (ILWVGPFVGALAAAAYHQYIL). Residues 266–282 (RAAAIKALGSFRSNPSN) are Cytoplasmic-facing.

This sequence belongs to the MIP/aquaporin (TC 1.A.8) family. PIP (TC 1.A.8.11) subfamily. In terms of tissue distribution, expressed in roots, leaves and fruits.

It localises to the cell membrane. In terms of biological role, water channel required to facilitate the transport of water across cell membrane; mercury-insensitive. Contributes to the tolerance to multiple abiotic stresses including salt (NaCl), cold and water deprivation, by modulating cytosolic K(+)/Na(+) ratio, maintaining osmotic balance, and reducing membrane injury (e.g. oxidative injury). Also regulates the expression of abscisic acid (ABA)- biosynthetic and -responsive genes during dehydration and salt stresses. This Musa acuminata (Banana) protein is Aquaporin PIP2-7.